A 175-amino-acid chain; its full sequence is MDIAIHHPWIRRPFFPFHSPSRLFDQFFGEHLLESDLFPASTSLSPFYFRPPSFLRAPSWIDTGLSEMRLEKDRFSVNLDVKHFSPEELKVKVLGDVIEVHGKHEERQDEHGFISREFHRKYRIPADVDPLTITSSLSSDGVLTVNGPRRQASGPERTIPITREEKPAVTAAPKK.

Position 1 is an N-acetylmethionine (Met-1). Phosphoserine is present on Ser-19. Ser-41 carries O-linked (GlcNAc) serine glycosylation. Residues Ser-45 and Ser-59 each carry the phosphoserine modification. The sHSP domain maps to 56–164 (RAPSWIDTGL…PERTIPITRE (109 aa)). Zn(2+) is bound at residue His-83. Lys-92 carries the post-translational modification N6-acetyllysine. The Zn(2+) site is built by His-104, Glu-106, His-111, and His-119. A disordered region spans residues 142–175 (VLTVNGPRRQASGPERTIPITREEKPAVTAAPKK). Residue Lys-166 is modified to N6-acetyllysine. An O-linked (GlcNAc) threonine glycan is attached at Thr-170.

This sequence belongs to the small heat shock protein (HSP20) family. Heteromer composed of three CRYAA and one CRYAB subunits. Aggregates with homologous proteins, including the small heat shock protein HSPB1, to form large heteromeric complexes. Inter-subunit bridging via zinc ions enhances stability, which is crucial as there is no protein turn over in the lens. Interacts with HSPBAP1 and TTN/titin. Interacts with TMEM109; in the cellular response to DNA damage. Interacts with DES; binds rapidly during early stages of DES filament assembly and a reduced binding seen in the later stages. Interacts with TMED10; the interaction mediates the translocation from the cytoplasm into the ERGIC (endoplasmic reticulum-Golgi intermediate compartment) and thereby secretion. Interacts with ATP6V1A and with MTOR, forming a ternary complex.

It localises to the cytoplasm. The protein localises to the nucleus. Its subcellular location is the secreted. The protein resides in the lysosome. In terms of biological role, may contribute to the transparency and refractive index of the lens. Has chaperone-like activity, preventing aggregation of various proteins under a wide range of stress conditions. In lens epithelial cells, stabilizes the ATP6V1A protein, preventing its degradation by the proteasome. The sequence is that of Alpha-crystallin B chain (CRYAB) from Sus scrofa (Pig).